The chain runs to 354 residues: Uroporphyrinogen decarboxylase (354 aa).

Substrate is bound by residues 27–31, D77, Y154, S209, and H327; that span reads RQAGR.

It belongs to the uroporphyrinogen decarboxylase family. Homodimer.

It localises to the cytoplasm. It catalyses the reaction uroporphyrinogen III + 4 H(+) = coproporphyrinogen III + 4 CO2. Its pathway is porphyrin-containing compound metabolism; protoporphyrin-IX biosynthesis; coproporphyrinogen-III from 5-aminolevulinate: step 4/4. Its function is as follows. Catalyzes the decarboxylation of four acetate groups of uroporphyrinogen-III to yield coproporphyrinogen-III. The protein is Uroporphyrinogen decarboxylase of Shewanella frigidimarina (strain NCIMB 400).